The following is a 367-amino-acid chain: Phosphoribosylaminoimidazole-succinocarboxamide synthase (367 aa).

Belongs to the SAICAR synthetase family.

It carries out the reaction 5-amino-1-(5-phospho-D-ribosyl)imidazole-4-carboxylate + L-aspartate + ATP = (2S)-2-[5-amino-1-(5-phospho-beta-D-ribosyl)imidazole-4-carboxamido]succinate + ADP + phosphate + 2 H(+). It participates in purine metabolism; IMP biosynthesis via de novo pathway; 5-amino-1-(5-phospho-D-ribosyl)imidazole-4-carboxamide from 5-amino-1-(5-phospho-D-ribosyl)imidazole-4-carboxylate: step 1/2. This Shewanella baltica (strain OS195) protein is Phosphoribosylaminoimidazole-succinocarboxamide synthase.